Reading from the N-terminus, the 268-residue chain is TATA-box-binding protein (268 aa).

The span at methionine 1–serine 24 shows a compositional bias: polar residues. The interval methionine 1 to alanine 86 is disordered. The span at asparagine 50–alanine 86 shows a compositional bias: low complexity. 2 tandem repeats follow at residues leucine 95–isoleucine 171 and isoleucine 185–leucine 262.

The protein belongs to the TBP family. In terms of assembly, belongs to the TFIID complex together with the TBP-associated factors (TAFs). Binds DNA as monomer.

It localises to the nucleus. In terms of biological role, general transcription factor that functions at the core of the DNA-binding multiprotein factor TFIID. Binding of TFIID to the TATA box is the initial transcriptional step of the pre-initiation complex (PIC), playing a role in the activation of eukaryotic genes transcribed by RNA polymerase II. The polypeptide is TATA-box-binding protein (tbpA) (Emericella nidulans (strain FGSC A4 / ATCC 38163 / CBS 112.46 / NRRL 194 / M139) (Aspergillus nidulans)).